Consider the following 470-residue polypeptide: Maturase K (470 aa).

This sequence belongs to the intron maturase 2 family. MatK subfamily.

It localises to the plastid. Its subcellular location is the chloroplast. Functionally, usually encoded in the trnK tRNA gene intron. Probably assists in splicing its own and other chloroplast group II introns. This is Maturase K from Nypa fruticans (Nypa palm).